An 88-amino-acid polypeptide reads, in one-letter code: Mini zinc finger protein 3 (88 aa).

The ZF-HD dimerization-type; degenerate zinc-finger motif lies at 26-72 (YVECQKNHAANIGGYAVDGCREFMASGGDDALTCAACGCHRNFHRRE).

In terms of assembly, homo- and heterodimers. Interacts with ZHD3, ZHD5, ZHD6, ZHD7, ZHD8, ZHD9, ZHD10 and ZHD13. Mostly expressed in roots, stems and flowers, present in seedlings and leaves, and weakly observed in inflorescence and siliques.

It is found in the cytoplasm. In terms of biological role, inhibits zinc finger homeodomain (ZHD) transcription factors by interacting with them to prevent both their nuclear localization and their DNA-binding properties. Involved in integrating signals from multiple hormones by regulating the expression of specific genes. Promotes the formation of ectopic shoot meristems on leaf margins. The polypeptide is Mini zinc finger protein 3 (MIF3) (Arabidopsis thaliana (Mouse-ear cress)).